The following is a 164-amino-acid chain: Cyclic pyranopterin monophosphate synthase (164 aa).

Substrate is bound by residues M75–H77 and M116–E117. D131 is an active-site residue.

The protein belongs to the MoaC family. In terms of assembly, homohexamer; trimer of dimers.

The enzyme catalyses (8S)-3',8-cyclo-7,8-dihydroguanosine 5'-triphosphate = cyclic pyranopterin phosphate + diphosphate. The protein operates within cofactor biosynthesis; molybdopterin biosynthesis. Functionally, catalyzes the conversion of (8S)-3',8-cyclo-7,8-dihydroguanosine 5'-triphosphate to cyclic pyranopterin monophosphate (cPMP). The chain is Cyclic pyranopterin monophosphate synthase from Staphylococcus aureus (strain Mu3 / ATCC 700698).